Here is a 378-residue protein sequence, read N- to C-terminus: Putative glutamate--cysteine ligase 2 (378 aa).

This sequence belongs to the glutamate--cysteine ligase type 2 family. YbdK subfamily.

It carries out the reaction L-cysteine + L-glutamate + ATP = gamma-L-glutamyl-L-cysteine + ADP + phosphate + H(+). Its function is as follows. ATP-dependent carboxylate-amine ligase which exhibits weak glutamate--cysteine ligase activity. This is Putative glutamate--cysteine ligase 2 from Salinispora arenicola (strain CNS-205).